Reading from the N-terminus, the 130-residue chain is Small ribosomal subunit protein uS9 (130 aa).

Belongs to the universal ribosomal protein uS9 family.

This Marinobacter nauticus (strain ATCC 700491 / DSM 11845 / VT8) (Marinobacter aquaeolei) protein is Small ribosomal subunit protein uS9.